We begin with the raw amino-acid sequence, 91 residues long: Large ribosomal subunit protein bL28 (91 aa).

It belongs to the bacterial ribosomal protein bL28 family.

This is Large ribosomal subunit protein bL28 from Protochlamydia amoebophila (strain UWE25).